The primary structure comprises 190 residues: Elongation factor P-like protein (190 aa).

This sequence belongs to the elongation factor P family.

This is Elongation factor P-like protein from Shigella boydii serotype 4 (strain Sb227).